The primary structure comprises 815 residues: Probable bifunctional folylpolyglutamate synthase/dihydropteroate synthase (815 aa).

Residues 1–416 (MRYDEAANFL…LVAGSLFAVA (416 aa)) form a folylpolyglutamate synthase region. Residue 47–53 (GSNGKGS) participates in ATP binding. The 251-residue stretch at 553–803 (TAVMGILNVT…DVPENVAAVR (251 aa)) folds into the Pterin-binding domain. Residues 555-815 (VMGILNVTPD…EATRTGADAE (261 aa)) are DHPS. Asn560 is a Mg(2+) binding site. (7,8-dihydropterin-6-yl)methyl diphosphate-binding positions include Thr600, Asp633, Asn652, Asp722, Lys758, and 791 to 793 (RVH).

In the N-terminal section; belongs to the folylpolyglutamate synthase family. This sequence in the C-terminal section; belongs to the DHPS family. Mg(2+) serves as cofactor.

It carries out the reaction (6S)-5,6,7,8-tetrahydrofolyl-(gamma-L-Glu)(n) + L-glutamate + ATP = (6S)-5,6,7,8-tetrahydrofolyl-(gamma-L-Glu)(n+1) + ADP + phosphate + H(+). The catalysed reaction is (7,8-dihydropterin-6-yl)methyl diphosphate + 4-aminobenzoate = 7,8-dihydropteroate + diphosphate. The protein operates within cofactor biosynthesis; tetrahydrofolylpolyglutamate biosynthesis. It functions in the pathway cofactor biosynthesis; tetrahydrofolate biosynthesis; 7,8-dihydrofolate from 2-amino-4-hydroxy-6-hydroxymethyl-7,8-dihydropteridine diphosphate and 4-aminobenzoate: step 1/2. Can complement an H.volcanii mutant strain that is thymidine auxotroph because it lacks the two dihydrofolate reductase genes encoded by hdrA and hdrB. The polypeptide is Probable bifunctional folylpolyglutamate synthase/dihydropteroate synthase (folP) (Halobacterium salinarum (strain ATCC 700922 / JCM 11081 / NRC-1) (Halobacterium halobium)).